The sequence spans 503 residues: Probable cytochrome P450 6a19 (503 aa).

C445 contributes to the heme binding site.

The protein belongs to the cytochrome P450 family. Heme is required as a cofactor.

It localises to the endoplasmic reticulum membrane. Its subcellular location is the microsome membrane. May be involved in the metabolism of insect hormones and in the breakdown of synthetic insecticides. In Drosophila melanogaster (Fruit fly), this protein is Probable cytochrome P450 6a19 (Cyp6a19).